The primary structure comprises 81 residues: Sulfur carrier protein TusA (81 aa).

Cysteine 19 functions as the Cysteine persulfide intermediate in the catalytic mechanism.

This sequence belongs to the sulfur carrier protein TusA family.

It localises to the cytoplasm. Functionally, sulfur carrier protein which probably makes part of a sulfur-relay system. The chain is Sulfur carrier protein TusA from Vibrio vulnificus (strain CMCP6).